The sequence spans 151 residues: Flagellar assembly factor FliW (151 aa).

The protein belongs to the FliW family. In terms of assembly, interacts with translational regulator CsrA and flagellin(s).

It is found in the cytoplasm. Functionally, acts as an anti-CsrA protein, binds CsrA and prevents it from repressing translation of its target genes, one of which is flagellin. Binds to flagellin and participates in the assembly of the flagellum. This chain is Flagellar assembly factor FliW, found in Lachnospira eligens (strain ATCC 27750 / DSM 3376 / VPI C15-48 / C15-B4) (Eubacterium eligens).